The sequence spans 61 residues: Small ribosomal subunit protein uS14B (61 aa).

Zn(2+)-binding residues include C24, C27, C40, and C43.

Belongs to the universal ribosomal protein uS14 family. Zinc-binding uS14 subfamily. As to quaternary structure, part of the 30S ribosomal subunit. Contacts proteins S3 and S10. Zn(2+) is required as a cofactor.

Functionally, binds 16S rRNA, required for the assembly of 30S particles and may also be responsible for determining the conformation of the 16S rRNA at the A site. In Lactococcus lactis subsp. lactis (strain IL1403) (Streptococcus lactis), this protein is Small ribosomal subunit protein uS14B.